The following is a 1345-amino-acid chain: Protein dispatched homolog 2 (1345 aa).

The tract at residues Met-1 to Pro-28 is disordered. Residues Val-125 to Gly-145 traverse the membrane as a helical segment. 2 N-linked (GlcNAc...) asparagine glycosylation sites follow: Asn-304 and Asn-420. One can recognise an SSD domain in the interval Leu-429–Leu-598. Transmembrane regions (helical) follow at residues Leu-440–Leu-460, Leu-465–Leu-485, Phe-497–Phe-517, Phe-544–Leu-564, Cys-572–Leu-592, and Tyr-659–Ser-679. Asn-776 carries N-linked (GlcNAc...) asparagine glycosylation. 5 consecutive transmembrane segments (helical) span residues Pro-919–Trp-939, Leu-945–Leu-965, Ala-974–Ser-994, Ala-1019–Leu-1039, and Leu-1043–Gln-1063. Disordered regions lie at residues Val-1251–Ile-1271 and Pro-1295–Ser-1345. The segment covering Met-1297–Ser-1306 has biased composition (polar residues). The residue at position 1310 (Arg-1310) is an Omega-N-methylarginine.

It belongs to the dispatched family.

It is found in the membrane. The chain is Protein dispatched homolog 2 (Disp2) from Mus musculus (Mouse).